The primary structure comprises 299 residues: MEHFDASLSTYFRALLGPRDTRVKGWFLLDNYIPTFVCSAIYLLIVWLGPKYMKNRQPFSCRGILVVYNLGLTLLSLYMFYELVTGVWEGKYNFFCQGTRSAGESDMKVIRVLWWYYFSKLIEFMDTFFFILRKNNHQITVLHVYHHATMLNIWWFVMNWVPCGHSYFGATLNSFIHVLMYSYYGLSSVPSMRPYLWWKKYITQGQLVQFVLTIIQTSCGVIWPCSFPLGWLYFQIGYMISLIALFTNFYIQTYNKKGASRRKEHLKGHQNGSMTAVNGHTNNFASLENSVTSRKQRKD.

M1 is modified (N-acetylmethionine). 7 consecutive transmembrane segments (helical) span residues 26–46 (WFLL…LLIV), 64–84 (ILVV…YELV), 112–132 (VLWW…FFIL), 139–158 (ITVL…WFVM), 168–187 (FGAT…YGLS), 205–225 (GQLV…IWPC), and 227–247 (FPLG…ALFT).

Belongs to the ELO family. ELOVL5 subfamily. Interacts with TECR. Highly expressed in lung and brain.

It is found in the endoplasmic reticulum membrane. The protein resides in the cell projection. The protein localises to the dendrite. It carries out the reaction a very-long-chain acyl-CoA + malonyl-CoA + H(+) = a very-long-chain 3-oxoacyl-CoA + CO2 + CoA. The enzyme catalyses (6Z,9Z,12Z,15Z)-octadecatetraenoyl-CoA + malonyl-CoA + H(+) = (8Z,11Z,14Z,17Z)-3-oxoicosatetraenoyl-CoA + CO2 + CoA. The catalysed reaction is (6Z,9Z,12Z)-octadecatrienoyl-CoA + malonyl-CoA + H(+) = (8Z,11Z,14Z)-3-oxoeicosatrienoyl-CoA + CO2 + CoA. It catalyses the reaction (5Z,8Z,11Z,14Z,17Z)-eicosapentaenoyl-CoA + malonyl-CoA + H(+) = 3-oxo-(7Z,10Z,13Z,16Z,19Z)-docosapentaenoyl-CoA + CO2 + CoA. It carries out the reaction (5Z,8Z,11Z,14Z)-eicosatetraenoyl-CoA + malonyl-CoA + H(+) = (7Z,10Z,13Z,16Z)-3-oxodocosatetraenoyl-CoA + CO2 + CoA. The enzyme catalyses (9Z,12Z,15Z)-octadecatrienoyl-CoA + malonyl-CoA + H(+) = (11Z,14Z,17Z)-3-oxoeicosatrienoyl-CoA + CO2 + CoA. The catalysed reaction is (9Z)-hexadecenoyl-CoA + malonyl-CoA + H(+) = 3-oxo-(11Z)-octadecenoyl-CoA + CO2 + CoA. It catalyses the reaction (9Z)-octadecenoyl-CoA + malonyl-CoA + H(+) = 3-oxo-(11Z)-eicosenoyl-CoA + CO2 + CoA. It carries out the reaction (11Z)-octadecenoyl-CoA + malonyl-CoA + H(+) = 3-oxo-(13Z)-eicosenoyl-CoA + CO2 + CoA. The enzyme catalyses (9Z,12Z)-octadecadienoyl-CoA + malonyl-CoA + H(+) = (11Z,14Z)-3-oxoicosa-11,14-dienoyl-CoA + CO2 + CoA. The protein operates within lipid metabolism; polyunsaturated fatty acid biosynthesis. In terms of biological role, catalyzes the first and rate-limiting reaction of the four reactions that constitute the long-chain fatty acids elongation cycle. This endoplasmic reticulum-bound enzymatic process allows the addition of 2 carbons to the chain of long- and very long-chain fatty acids (VLCFAs) per cycle. Condensing enzyme that acts specifically toward polyunsaturated acyl-CoA with the higher activity toward C18:3(n-6) acyl-CoA. May participate in the production of monounsaturated and of polyunsaturated VLCFAs of different chain lengths that are involved in multiple biological processes as precursors of membrane lipids and lipid mediators. In conditions where the essential linoleic and alpha linoleic fatty acids are lacking it is also involved in the synthesis of Mead acid from oleic acid. The sequence is that of Very long chain fatty acid elongase 5 from Rattus norvegicus (Rat).